The primary structure comprises 548 residues: Glutamate--tRNA ligase (548 aa).

The 'HIGH' region motif lies at Pro-102–His-112.

The protein belongs to the class-I aminoacyl-tRNA synthetase family. Glutamate--tRNA ligase type 2 subfamily.

Its subcellular location is the cytoplasm. The enzyme catalyses tRNA(Glu) + L-glutamate + ATP = L-glutamyl-tRNA(Glu) + AMP + diphosphate. In terms of biological role, catalyzes the attachment of glutamate to tRNA(Glu) in a two-step reaction: glutamate is first activated by ATP to form Glu-AMP and then transferred to the acceptor end of tRNA(Glu). In Thermoplasma acidophilum (strain ATCC 25905 / DSM 1728 / JCM 9062 / NBRC 15155 / AMRC-C165), this protein is Glutamate--tRNA ligase.